Here is a 186-residue protein sequence, read N- to C-terminus: Protein C (186 aa).

A compositionally biased stretch (polar residues) spans M1–S15. The tract at residues M1–G44 is disordered.

The protein belongs to the morbillivirus protein C family. In terms of assembly, interacts with the phosphoprotein (via C-terminus); this interaction allows C to associate with the ribonucleocapsid.

The protein resides in the host nucleus. It localises to the host cytoplasmic vesicle. Its function is as follows. Ribonucleocapsid-associated protein that interacts with the phosphoprotein (P), thereby increasing replication accuracy and processivity of the polymerase complex. The sequence is that of Protein C (P/V/C) from Homo sapiens (Human).